The sequence spans 382 residues: DNA replication and repair protein RecF (382 aa).

Residue 30-37 coordinates ATP; the sequence is GPNGHGKS.

Belongs to the RecF family.

Its subcellular location is the cytoplasm. In terms of biological role, the RecF protein is involved in DNA metabolism; it is required for DNA replication and normal SOS inducibility. RecF binds preferentially to single-stranded, linear DNA. It also seems to bind ATP. The chain is DNA replication and repair protein RecF from Magnetococcus marinus (strain ATCC BAA-1437 / JCM 17883 / MC-1).